Consider the following 335-residue polypeptide: Holliday junction branch migration complex subunit RuvB (335 aa).

Residues 1–181 are large ATPase domain (RuvB-L); sequence MDRIVEIEKY…FGMQFRLEFY (181 aa). Leu-20 is a binding site for ATP. ADP is bound by residues Arg-21, Tyr-28, Ile-29, Gly-62, Leu-63, Gly-64, Lys-65, Thr-66, and Thr-67. Residues 128–130 and Arg-171 contribute to the ATP site; that span reads EDY. Positions 181 and 218 each coordinate ADP. The segment at 182–252 is small ATPAse domain (RuvB-S); the sequence is KDSELALILQ…RANEALNSLG (71 aa). The head domain (RuvB-H) stretch occupies residues 255-335; it reads ELGFDAMDLR…LNYEKTLFEE (81 aa). The DNA site is built by Arg-309 and Arg-314.

The protein belongs to the RuvB family. As to quaternary structure, homohexamer. Forms an RuvA(8)-RuvB(12)-Holliday junction (HJ) complex. HJ DNA is sandwiched between 2 RuvA tetramers; dsDNA enters through RuvA and exits via RuvB. An RuvB hexamer assembles on each DNA strand where it exits the tetramer. Each RuvB hexamer is contacted by two RuvA subunits (via domain III) on 2 adjacent RuvB subunits; this complex drives branch migration. In the full resolvosome a probable DNA-RuvA(4)-RuvB(12)-RuvC(2) complex forms which resolves the HJ.

The protein localises to the cytoplasm. It carries out the reaction ATP + H2O = ADP + phosphate + H(+). Functionally, the RuvA-RuvB-RuvC complex processes Holliday junction (HJ) DNA during genetic recombination and DNA repair, while the RuvA-RuvB complex plays an important role in the rescue of blocked DNA replication forks via replication fork reversal (RFR). RuvA specifically binds to HJ cruciform DNA, conferring on it an open structure. The RuvB hexamer acts as an ATP-dependent pump, pulling dsDNA into and through the RuvAB complex. RuvB forms 2 homohexamers on either side of HJ DNA bound by 1 or 2 RuvA tetramers; 4 subunits per hexamer contact DNA at a time. Coordinated motions by a converter formed by DNA-disengaged RuvB subunits stimulates ATP hydrolysis and nucleotide exchange. Immobilization of the converter enables RuvB to convert the ATP-contained energy into a lever motion, pulling 2 nucleotides of DNA out of the RuvA tetramer per ATP hydrolyzed, thus driving DNA branch migration. The RuvB motors rotate together with the DNA substrate, which together with the progressing nucleotide cycle form the mechanistic basis for DNA recombination by continuous HJ branch migration. Branch migration allows RuvC to scan DNA until it finds its consensus sequence, where it cleaves and resolves cruciform DNA. The polypeptide is Holliday junction branch migration complex subunit RuvB (Campylobacter jejuni subsp. jejuni serotype O:2 (strain ATCC 700819 / NCTC 11168)).